A 513-amino-acid polypeptide reads, in one-letter code: GTPase Obg (513 aa).

In terms of domain architecture, Obg spans 3 to 160 (THFVDRVVVH…LDLHLEVKTL (158 aa)). Residues 161–337 (ADVALVGFPS…LSFAMAELVS (177 aa)) form the OBG-type G domain. GTP-binding positions include 167–174 (GFPSAGKS), 192–196 (FTTLV), 213–216 (DVPG), 289–292 (NKAD), and 318–320 (SAV). Mg(2+)-binding residues include serine 174 and threonine 194. One can recognise an OCT domain in the interval 355-444 (PRAVDDQGFK…ANAVVFDWEP (90 aa)). Residues 457–513 (GSDLRLEDHSRPTRDEKRLQERERRAAKVTARDELEAERRAGHWTAADEADEELSQR) are disordered. A compositionally biased stretch (basic and acidic residues) spans 458-497 (SDLRLEDHSRPTRDEKRLQERERRAAKVTARDELEAERRA). Residues 504–513 (DEADEELSQR) are compositionally biased toward acidic residues.

It belongs to the TRAFAC class OBG-HflX-like GTPase superfamily. OBG GTPase family. As to quaternary structure, monomer. It depends on Mg(2+) as a cofactor.

It is found in the cytoplasm. Its function is as follows. An essential GTPase which binds GTP, GDP and possibly (p)ppGpp with moderate affinity, with high nucleotide exchange rates and a fairly low GTP hydrolysis rate. Plays a role in control of the cell cycle, stress response, ribosome biogenesis and in those bacteria that undergo differentiation, in morphogenesis control. The polypeptide is GTPase Obg (Kineococcus radiotolerans (strain ATCC BAA-149 / DSM 14245 / SRS30216)).